Reading from the N-terminus, the 296-residue chain is 4-hydroxy-tetrahydrodipicolinate synthase (296 aa).

Thr-45 is a pyruvate binding site. Tyr-133 serves as the catalytic Proton donor/acceptor. Lys-161 functions as the Schiff-base intermediate with substrate in the catalytic mechanism. Ile-203 serves as a coordination point for pyruvate.

The protein belongs to the DapA family. Homotetramer; dimer of dimers.

Its subcellular location is the cytoplasm. It catalyses the reaction L-aspartate 4-semialdehyde + pyruvate = (2S,4S)-4-hydroxy-2,3,4,5-tetrahydrodipicolinate + H2O + H(+). The protein operates within amino-acid biosynthesis; L-lysine biosynthesis via DAP pathway; (S)-tetrahydrodipicolinate from L-aspartate: step 3/4. Its function is as follows. Catalyzes the condensation of (S)-aspartate-beta-semialdehyde [(S)-ASA] and pyruvate to 4-hydroxy-tetrahydrodipicolinate (HTPA). This Idiomarina loihiensis (strain ATCC BAA-735 / DSM 15497 / L2-TR) protein is 4-hydroxy-tetrahydrodipicolinate synthase.